We begin with the raw amino-acid sequence, 104 residues long: Pyrimidine/purine nucleoside phosphorylase (104 aa).

This sequence belongs to the nucleoside phosphorylase PpnP family.

The catalysed reaction is a purine D-ribonucleoside + phosphate = a purine nucleobase + alpha-D-ribose 1-phosphate. The enzyme catalyses adenosine + phosphate = alpha-D-ribose 1-phosphate + adenine. It catalyses the reaction cytidine + phosphate = cytosine + alpha-D-ribose 1-phosphate. It carries out the reaction guanosine + phosphate = alpha-D-ribose 1-phosphate + guanine. The catalysed reaction is inosine + phosphate = alpha-D-ribose 1-phosphate + hypoxanthine. The enzyme catalyses thymidine + phosphate = 2-deoxy-alpha-D-ribose 1-phosphate + thymine. It catalyses the reaction uridine + phosphate = alpha-D-ribose 1-phosphate + uracil. It carries out the reaction xanthosine + phosphate = alpha-D-ribose 1-phosphate + xanthine. In terms of biological role, catalyzes the phosphorolysis of diverse nucleosides, yielding D-ribose 1-phosphate and the respective free bases. Can use uridine, adenosine, guanosine, cytidine, thymidine, inosine and xanthosine as substrates. Also catalyzes the reverse reactions. The sequence is that of Pyrimidine/purine nucleoside phosphorylase from Geobacter sulfurreducens (strain ATCC 51573 / DSM 12127 / PCA).